The sequence spans 302 residues: Nucleotide-binding protein STH186 (302 aa).

Residue 15–22 coordinates ATP; that stretch reads GMSGAGKT. 66 to 69 is a binding site for GTP; that stretch reads DIRG.

The protein belongs to the RapZ-like family.

Functionally, displays ATPase and GTPase activities. The sequence is that of Nucleotide-binding protein STH186 from Symbiobacterium thermophilum (strain DSM 24528 / JCM 14929 / IAM 14863 / T).